The chain runs to 216 residues: Large ribosomal subunit protein uL3 (216 aa).

The residue at position 153 (Q153) is an N5-methylglutamine.

It belongs to the universal ribosomal protein uL3 family. In terms of assembly, part of the 50S ribosomal subunit. Forms a cluster with proteins L14 and L19. Post-translationally, methylated by PrmB.

Functionally, one of the primary rRNA binding proteins, it binds directly near the 3'-end of the 23S rRNA, where it nucleates assembly of the 50S subunit. The sequence is that of Large ribosomal subunit protein uL3 from Burkholderia ambifaria (strain MC40-6).